The primary structure comprises 294 residues: Basic endochitinase (294 aa).

Positions 1-24 are cleaved as a signal peptide; the sequence is MNIKVSLLFILPIFLLLLTSKVKA. A GH18 domain is found at 25–294; it reads GDIVVYWGQD…GYSSAIRGAV (270 aa). 2 disulfide bridges follow: Cys-44/Cys-91 and Cys-74/Cys-81. Catalysis depends on Glu-151, which acts as the Proton donor. A disulfide bond links Cys-182 and Cys-211.

It belongs to the glycosyl hydrolase 18 family. Chitinase class II subfamily.

It catalyses the reaction Random endo-hydrolysis of N-acetyl-beta-D-glucosaminide (1-&gt;4)-beta-linkages in chitin and chitodextrins.. This protein functions as a defense against chitin containing fungal pathogens. This is Basic endochitinase from Nicotiana tabacum (Common tobacco).